The sequence spans 362 residues: MRVTAPRTLLLLLSAALALTETWAGSHSMRYFDTAVSRPGRGEPRFITVGYVDDTQFVRFDSDAASPRMEPRAPWIEQEGPEYWDRETQTSKAQAQTDRENLRIALRYYNQSEAGSHTIQRMFGCDVGPDGRLLRGYSQSAYDGKDYIALNEDLSSWTAADTAAQITQRKWEAAREAEQLRAYLEGTCVEWLRRYLENGRETLQRADTPKTHVTHHPISDHEATLRCWALGFYPAEITLTWQRDGEDQTQDTELVETRPAGDGTFQKWAAVVVPSGEEERYTCHVQHEGLPKPLTLRWEPSSQSTIPIVGIVAGLAVLAVVVIGAVVTAVICRRKSSGGKGGSYSQAASSDSAQGSDVSLTA.

Residues 1–24 (MRVTAPRTLLLLLSAALALTETWA) form the signal peptide. The interval 25 to 114 (GSHSMRYFDT…ALRYYNQSEA (90 aa)) is alpha-1. The Extracellular segment spans residues 25-308 (GSHSMRYFDT…EPSSQSTIPI (284 aa)). N-linked (GlcNAc...) asparagine glycosylation occurs at Asn110. An alpha-2 region spans residues 115–206 (GSHTIQRMFG…ENGRETLQRA (92 aa)). Intrachain disulfides connect Cys125–Cys188 and Cys227–Cys283. Positions 207–298 (DTPKTHVTHH…GLPKPLTLRW (92 aa)) are alpha-3. Positions 209-295 (PKTHVTHHPI…QHEGLPKPLT (87 aa)) constitute an Ig-like C1-type domain. Residues 299 to 308 (EPSSQSTIPI) are connecting peptide. Residues 309 to 332 (VGIVAGLAVLAVVVIGAVVTAVIC) traverse the membrane as a helical segment. Over 333–362 (RRKSSGGKGGSYSQAASSDSAQGSDVSLTA) the chain is Cytoplasmic. A disordered region spans residues 335–362 (KSSGGKGGSYSQAASSDSAQGSDVSLTA). A compositionally biased stretch (low complexity) spans 343 to 362 (SYSQAASSDSAQGSDVSLTA). Ser356 and Ser359 each carry phosphoserine.

This sequence belongs to the MHC class I family. As to quaternary structure, heterodimer of an alpha chain and a beta chain (beta-2-microglobulin).

The protein resides in the membrane. In terms of biological role, involved in the presentation of foreign antigens to the immune system. The sequence is that of Class I histocompatibility antigen, Gogo-B*0101 alpha chain from Gorilla gorilla gorilla (Western lowland gorilla).